The chain runs to 352 residues: Putative conjugal transfer protein MT3759 (352 aa).

160–167 (GGTGAGKT) serves as a coordination point for ATP.

It belongs to the GSP E family.

The protein resides in the cytoplasm. This chain is Putative conjugal transfer protein MT3759, found in Mycobacterium tuberculosis (strain CDC 1551 / Oshkosh).